We begin with the raw amino-acid sequence, 503 residues long: Aromatase (503 aa).

Heme is bound at residue C437.

The protein belongs to the cytochrome P450 family. Heme is required as a cofactor.

The protein resides in the membrane. It carries out the reaction testosterone + 3 reduced [NADPH--hemoprotein reductase] + 3 O2 = 17beta-estradiol + formate + 3 oxidized [NADPH--hemoprotein reductase] + 4 H2O + 4 H(+). It catalyses the reaction androst-4-ene-3,17-dione + 3 reduced [NADPH--hemoprotein reductase] + 3 O2 = estrone + formate + 3 oxidized [NADPH--hemoprotein reductase] + 4 H2O + 4 H(+). Its function is as follows. Catalyzes the formation of aromatic C18 estrogens from C19 androgens. This is Aromatase (CYP19A1) from Oryctolagus cuniculus (Rabbit).